The sequence spans 452 residues: Agmatine coumaroyltransferase (452 aa).

Residues His-163 and Asp-396 each act as proton acceptor in the active site.

It belongs to the plant acyltransferase family.

It carries out the reaction 4-coumaroyl-CoA + agmatine = N-(4-guanidinobutyl)-4-hydroxycinnamamide + CoA + H(+). Involved in the biosynthesis of hydroxycinnamic acid amides, which play a role in defense against pathogens. Agmatine is the preferred acyl acceptor, lower activity is observed towards putrescine. The preferred acyl donor is p-coumaroyl-CoA, lower activity is seen towards feruloyl-CoA. In Arabidopsis thaliana (Mouse-ear cress), this protein is Agmatine coumaroyltransferase.